Reading from the N-terminus, the 238-residue chain is Neuromodulin (238 aa).

The interval 1–238 (MLCCMRRTKQ…EEPEADQEHA (238 aa)) is disordered. 2 S-palmitoyl cysteine lipidation sites follow: Cys3 and Cys4. Over residues 9 to 32 (KQVEKNDEDQKIEQDGIKPEDKAH) the composition is skewed to basic and acidic residues. Residues 31–60 (AHKAATKIQASFRGHITRKKLKGEKKDDAQ) enclose the IQ domain. Residue Ser41 is modified to Phosphoserine; by PHK and PKC. Residues 54 to 83 (EKKDDAQAAEAEANKKDEAPVADGVEKKGE) show a composition bias toward basic and acidic residues. Positions 84 to 95 (GTTATEAAPATG) are enriched in low complexity. Basic and acidic residues predominate over residues 97-116 (KPDEPGKAGETPSEEKKGEG). Residues 119 to 130 (ATEQAAPQAPAS) show a composition bias toward low complexity. Residues 139–154 (ETESATKASTDNSPSS) show a composition bias toward polar residues. 3 positions are modified to phosphoserine: Ser151, Ser153, and Ser154. Residues 155–167 (KAEDAPAKEEPKQ) show a composition bias toward basic and acidic residues. Over residues 168 to 199 (ADVPAAVTAAAATTPAAEDAAAKATAQPPTET) the composition is skewed to low complexity. A Phosphothreonine modification is found at Thr181. 2 positions are modified to phosphoserine; by CK2: Ser202 and Ser203. Residues 213–225 (DETKPKESARQDE) show a composition bias toward basic and acidic residues. Over residues 226–238 (GKEEEPEADQEHA) the composition is skewed to acidic residues.

Belongs to the neuromodulin family. As to quaternary structure, identified in a complex containing FGFR4, NCAM1, CDH2, PLCG1, FRS2, SRC, SHC1, GAP43 and CTTN. Interacts (via IQ domain) with calmodulin. Binds calmodulin with a greater affinity in the absence of Ca(2+) than in its presence. Post-translationally, phosphorylated. Phosphorylation of this protein by a protein kinase C is specifically correlated with certain forms of synaptic plasticity. Palmitoylated by ZDHHC3. Palmitoylation is regulated by ARF6 and is essential for plasma membrane association and axonal and dendritic filopodia induction. Deacylated by LYPLA2.

Its subcellular location is the cell membrane. The protein resides in the cell projection. It is found in the growth cone membrane. It localises to the synapse. The protein localises to the filopodium membrane. Its subcellular location is the perikaryon. The protein resides in the dendrite. It is found in the axon. It localises to the cytoplasm. In terms of biological role, this protein is associated with nerve growth. It is a major component of the motile 'growth cones' that form the tips of elongating axons. Plays a role in axonal and dendritic filopodia induction. This Macaca fascicularis (Crab-eating macaque) protein is Neuromodulin (GAP43).